Consider the following 137-residue polypeptide: Peptide methionine sulfoxide reductase MsrB (137 aa).

One can recognise a MsrB domain in the interval 7–129 (AEELKKKLSE…NSASLAFSDE (123 aa)). Positions 46, 49, 95, and 98 each coordinate Zn(2+). C118 functions as the Nucleophile in the catalytic mechanism.

This sequence belongs to the MsrB Met sulfoxide reductase family. The cofactor is Zn(2+).

The enzyme catalyses L-methionyl-[protein] + [thioredoxin]-disulfide + H2O = L-methionyl-(R)-S-oxide-[protein] + [thioredoxin]-dithiol. In Salmonella dublin (strain CT_02021853), this protein is Peptide methionine sulfoxide reductase MsrB.